We begin with the raw amino-acid sequence, 177 residues long: Large ribosomal subunit protein uL6 (177 aa).

It belongs to the universal ribosomal protein uL6 family. Part of the 50S ribosomal subunit.

Functionally, this protein binds to the 23S rRNA, and is important in its secondary structure. It is located near the subunit interface in the base of the L7/L12 stalk, and near the tRNA binding site of the peptidyltransferase center. The protein is Large ribosomal subunit protein uL6 of Methylobacterium nodulans (strain LMG 21967 / CNCM I-2342 / ORS 2060).